Reading from the N-terminus, the 620-residue chain is Schwann cell myelin protein (620 aa).

A signal peptide spans methionine 1–serine 17. The Extracellular segment spans residues alanine 18 to proline 516. Positions methionine 28–leucine 106 constitute an Ig-like V-type domain. 3 disulfides stabilise this stretch: cysteine 35–cysteine 164, cysteine 40–cysteine 99, and cysteine 158–cysteine 216. Arginine 117 is a binding site for N-acetylneuraminate. Ig-like C2-type domains follow at residues glycine 151–leucine 233, proline 239–alanine 322, proline 325–serine 407, and valine 414–glycine 495. Residue asparagine 222 is glycosylated (N-linked (GlcNAc...) asparagine). Residues cysteine 260 and cysteine 304 are joined by a disulfide bond. N-linked (GlcNAc...) asparagine glycosylation is found at asparagine 314 and asparagine 331. Residues cysteine 346 and cysteine 391 are joined by a disulfide bond. A glycan (N-linked (GlcNAc...) asparagine) is linked at asparagine 405. Cystine bridges form between cysteine 420-cysteine 429 and cysteine 431-cysteine 488. A glycan (N-linked (GlcNAc...) asparagine) is linked at asparagine 449. Residues valine 517 to serine 536 form a helical membrane-spanning segment. The Cytoplasmic segment spans residues arginine 537–lysine 620. Disordered stretches follow at residues lysine 539–leucine 562 and valine 583–lysine 620.

The protein belongs to the immunoglobulin superfamily. SIGLEC (sialic acid binding Ig-like lectin) family. Exclusively expressed by myelinating and nonmyelinating Schwann cells and oligodendrocytes.

Its subcellular location is the membrane. The protein is Schwann cell myelin protein (SMP) of Coturnix japonica (Japanese quail).